Consider the following 224-residue polypeptide: Transcription factor HEC3 (224 aa).

Disordered stretches follow at residues 22–42 and 68–88; these read SSNNNNKNDDHHHQHNNDPIG and SLTTTTLLSGDQEDDEDEEEP. Over residues 28-37 the composition is skewed to basic and acidic residues; that stretch reads KNDDHHHQHN. Over residues 68–77 the composition is skewed to low complexity; it reads SLTTTTLLSG. Over residues 78-88 the composition is skewed to acidic residues; the sequence is DQEDDEDEEEP. The bHLH domain occupies 125–174; the sequence is ISDDPQSVAARHRRERISERIRILQRLVPGGTKMDTASMLDEAIRYVKFL. Residues 183–224 are disordered; it reads NNTGYTPPPPQDQASQAVTTSWVSPPPPPSFGRGGRGVGELI. Residues 194–204 show a composition bias toward polar residues; sequence DQASQAVTTSW. The segment covering 214-224 has biased composition (gly residues); sequence GRGGRGVGELI.

As to quaternary structure, homodimer. Interacts with SPT. Gynoecium.

It localises to the nucleus. Functionally, required for the female reproductive tract development and fertility. In Arabidopsis thaliana (Mouse-ear cress), this protein is Transcription factor HEC3 (HEC3).